Consider the following 277-residue polypeptide: MATSGMVSPTSGRPFSPMRSSVLTTTGSAIKLEHVSEKFAGLWTDLEQEKQARRIAEATRMQLFQESVLRLEKSMEAEVKRRAESDKQLQAHFEGELRVLHERSACQVAEMHNSLKSAIDSFSSRVQDLHAVIREERDQRRNDIEHLATSLVGKVNECVAALDEERTIRMQEQAMALKRFGEDISGVNHRVDTEKAQREADLSGLRVEIHDVLANRNIQDEQFKTVTLDELNAFKAALALEREERVAEDDEIVQAINDYTRALQEGLKMVNMQHNSA.

Positions 1-20 (MATSGMVSPTSGRPFSPMRS) are disordered. Residues 1–27 (MATSGMVSPTSGRPFSPMRSSVLTTTG) form a nonhelical region region. Positions 28–277 (SAIKLEHVSE…KMVNMQHNSA (250 aa)) are rod. A coiled-coil region spans residues 70–90 (RLEKSMEAEVKRRAESDKQLQ).

The protein belongs to the SF-assemblin family. In terms of processing, the N-terminus is blocked.

The protein resides in the cytoplasm. It localises to the cytoskeleton. Functionally, major component of the striated microtubule-associated fibers (SMAFs; system-I-fibers). The protein is SF-assemblin of Dunaliella bioculata (Green alga).